A 324-amino-acid polypeptide reads, in one-letter code: Succinylglutamate desuccinylase (324 aa).

The Zn(2+) site is built by H53, E56, and H148. E211 is an active-site residue.

It belongs to the AspA/AstE family. Succinylglutamate desuccinylase subfamily. Zn(2+) is required as a cofactor.

It catalyses the reaction N-succinyl-L-glutamate + H2O = L-glutamate + succinate. The protein operates within amino-acid degradation; L-arginine degradation via AST pathway; L-glutamate and succinate from L-arginine: step 5/5. In terms of biological role, transforms N(2)-succinylglutamate into succinate and glutamate. The sequence is that of Succinylglutamate desuccinylase from Acinetobacter baumannii (strain AB0057).